The chain runs to 408 residues: MASSSRFAALLLLALPALALPPSQVVPRAACATPSTVPGYNNDRLPDPFLFDDGTAVTSSADWDCRRSQIAAVVQGYEAGYLPPQPPIVSATFSSSDGTGTLTVTAGLSSDNTISFSEPITYPSGTAPAAGWPLVIAYDVLSIPVPDGIAVMVYNNDDIAQENDLSSRGVGLFYDLYGTDATASAMTAWVWGVSRIIDALETTPAANINTAKIAVTGCSRDGKGALMAGAFEPRVALTIPQESGSGGDTCWRLSKYEQDSGDVVQQATEIVTENVWFSTNFDNYVNNLSVLPYDHHELAAMVAPRPLLSYENTEYEWLSPLSAYGCMSAAHTVYEALGIPDYHGFVQVGNHSHCYFPDTLDDSLYAFFDRFLLDEDDVSTDYFTTNYQFNGTVWNASYWINWTTPQLD.

The first 19 residues, 1–19 (MASSSRFAALLLLALPALA), serve as a signal peptide directing secretion. Intrachain disulfides connect C31/C65, C218/C354, and C250/C326. Residues 217–222 (GCSRDG) carry the GXSYXG catalytic site motif motif. Catalysis depends on S219, which acts as the Nucleophile. Substrate contacts are provided by K223, Q265, and E273. N287 carries N-linked (GlcNAc...) asparagine glycosylation. W317 lines the substrate pocket. Residue N350 is glycosylated (N-linked (GlcNAc...) asparagine). Catalysis depends on H353, which acts as the Proton donor/acceptor. N390, N395, and N401 each carry an N-linked (GlcNAc...) asparagine glycan.

The protein belongs to the carbohydrate esterase 15 (CE15) family.

The protein localises to the secreted. It catalyses the reaction a 4-O-methyl-alpha-D-glucuronosyl ester derivative + H2O = 4-O-methyl-alpha-D-glucuronate derivative + an alcohol + H(+). Glucuronoyl esterase which may play a significant role in biomass degradation, as it is considered to disconnect hemicellulose from lignin through the hydrolysis of the ester bond between 4-O-methyl-D-glucuronic acid residues of glucuronoxylans and aromatic alcohols of lignin. Can hydrolyze benzyl glucuronic acid (BnGlcA), allyl glucuronic acid (allylGlcA) and to a lower degree methyl glucuronic acid (MeGlcA) in vitro. In Wolfiporia cocos (strain MD-104) (Brown rot fungus), this protein is 4-O-methyl-glucuronoyl methylesterase 1.